The following is a 912-amino-acid chain: Serine/threonine-protein kinase D1 (912 aa).

Tyrosine 95 is subject to Phosphotyrosine. Residues 146–196 form a Phorbol-ester/DAG-type 1 zinc finger; that stretch reads PHALFVHSYRAPAFCDHCGEMLWGLVRQGLKCEGCGLNYHKRCAFKIPNNC. Phosphoserine is present on residues serine 205, serine 208, serine 219, and serine 223. The Phorbol-ester/DAG-type 2 zinc finger occupies 270–320; the sequence is PHTFVIHSYTRPTVCQYCKKLLKGLFRQGLQCKDCRFNCHKRCAPKVPNNC. A Phosphoserine modification is found at serine 345. The interval 377 to 402 is disordered; that stretch reads NDSGEMQDPDPDHEDANRTISPSTSN. Phosphoserine; by MAPK13 occurs at positions 397 and 401. The region spanning 422 to 541 is the PH domain; sequence TVMKEGWMVH…WEIAIQHALM (120 aa). A Phosphotyrosine modification is found at tyrosine 432. At serine 448 the chain carries Phosphoserine. A Phosphotyrosine; by ABL modification is found at tyrosine 463. Serine 473 is subject to Phosphoserine. Tyrosine 502 bears the Phosphotyrosine mark. Serine 548 carries the post-translational modification Phosphoserine. Residues 583 to 839 form the Protein kinase domain; it reads IFPDEVLGSG…VDKTLSHPWL (257 aa). ATP-binding positions include 589 to 597 and lysine 612; that span reads LGSGQFGIV. Residue aspartate 706 is the Proton acceptor of the active site. Serine 738 carries the post-translational modification Phosphoserine; by PKC/PRKCD. Serine 742 carries the post-translational modification Phosphoserine; by autocatalysis and PKC/PRKCD. The residue at position 749 (tyrosine 749) is a Phosphotyrosine. A Phosphoserine; by autocatalysis modification is found at serine 910.

Belongs to the protein kinase superfamily. CAMK Ser/Thr protein kinase family. PKD subfamily. As to quaternary structure, interacts (via N-terminus) with ADAP1/CENTA1. Interacts with MAPK13. Interacts with DAPK1 in an oxidative stress-regulated manner. Interacts with USP28; the interaction induces phosphorylation of USP28 and activated KRAS-mediated stabilization of ZNF304. Interacts with AKAP13 (via C-terminal domain). The cofactor is Mg(2+). Phosphorylated at Ser-397 and Ser-401 by MAPK13 during regulation of insulin secretion in pancreatic beta cells. Phosphorylated by DAPK1. Phosphorylated at Tyr-95 and by ABL at Tyr-463, which primes the kinase in response to oxidative stress, and promotes a second step activating phosphorylation at Ser-738/Ser-742 by PKRD. Phosphorylated on Ser-910 upon S.enterica infection in macrophages.

It localises to the cytoplasm. It is found in the cell membrane. The protein localises to the golgi apparatus. The protein resides in the trans-Golgi network. It carries out the reaction L-seryl-[protein] + ATP = O-phospho-L-seryl-[protein] + ADP + H(+). The enzyme catalyses L-threonyl-[protein] + ATP = O-phospho-L-threonyl-[protein] + ADP + H(+). Its activity is regulated as follows. Activated by DAG and phorbol esters. Phorbol-ester/DAG-type domain 1 binds DAG with high affinity and appears to play the dominant role in mediating translocation to the cell membrane and trans-Golgi network. Phorbol-ester/DAG-type domain 2 binds phorbol ester with higher affinity. Autophosphorylation of Ser-742 and phosphorylation of Ser-738 by PKC relieves auto-inhibition by the PH domain. Phosphorylation on Tyr-463 by the SRC-ABL1 pathway in response to oxidative stress, is also required for activation. Activated by DAPK1 under oxidative stress. Functionally, serine/threonine-protein kinase that converts transient diacylglycerol (DAG) signals into prolonged physiological effects downstream of PKC, and is involved in the regulation of MAPK8/JNK1 and Ras signaling, Golgi membrane integrity and trafficking, cell survival through NF-kappa-B activation, cell migration, cell differentiation by mediating HDAC7 nuclear export, cell proliferation via MAPK1/3 (ERK1/2) signaling, and plays a role in cardiac hypertrophy, VEGFA-induced angiogenesis, genotoxic-induced apoptosis and flagellin-stimulated inflammatory response. Phosphorylates the epidermal growth factor receptor (EGFR) on dual threonine residues, which leads to the suppression of epidermal growth factor (EGF)-induced MAPK8/JNK1 activation and subsequent JUN phosphorylation. Phosphorylates RIN1, inducing RIN1 binding to 14-3-3 proteins YWHAB, YWHAE and YWHAZ and increased competition with RAF1 for binding to GTP-bound form of Ras proteins (NRAS, HRAS and KRAS). Acts downstream of the heterotrimeric G-protein beta/gamma-subunit complex to maintain the structural integrity of the Golgi membranes, and is required for protein transport along the secretory pathway. In the trans-Golgi network (TGN), regulates the fission of transport vesicles that are on their way to the plasma membrane. May act by activating the lipid kinase phosphatidylinositol 4-kinase beta (PI4KB) at the TGN for the local synthesis of phosphorylated inositol lipids, which induces a sequential production of DAG, phosphatidic acid (PA) and lyso-PA (LPA) that are necessary for membrane fission and generation of specific transport carriers to the cell surface. Under oxidative stress, is phosphorylated at Tyr-463 via SRC-ABL1 and contributes to cell survival by activating IKK complex and subsequent nuclear translocation and activation of NFKB1. Involved in cell migration by regulating integrin alpha-5/beta-3 recycling and promoting its recruitment in newly forming focal adhesion. In osteoblast differentiation, mediates the bone morphogenetic protein 2 (BMP2)-induced nuclear export of HDAC7, which results in the inhibition of HDAC7 transcriptional repression of RUNX2. In neurons, plays an important role in neuronal polarity by regulating the biogenesis of TGN-derived dendritic vesicles, and is involved in the maintenance of dendritic arborization and Golgi structure in hippocampal cells. May potentiate mitogenesis induced by the neuropeptide bombesin or vasopressin by mediating an increase in the duration of MAPK1/3 (ERK1/2) signaling, which leads to accumulation of immediate-early gene products including FOS that stimulate cell cycle progression. Plays an important role in the proliferative response induced by low calcium in keratinocytes, through sustained activation of MAPK1/3 (ERK1/2) pathway. Downstream of novel PKC signaling, plays a role in cardiac hypertrophy by phosphorylating HDAC5, which in turn triggers XPO1/CRM1-dependent nuclear export of HDAC5, MEF2A transcriptional activation and induction of downstream target genes that promote myocyte hypertrophy and pathological cardiac remodeling. Mediates cardiac troponin I (TNNI3) phosphorylation at the PKA sites, which results in reduced myofilament calcium sensitivity, and accelerated crossbridge cycling kinetics. The PRKD1-HDAC5 pathway is also involved in angiogenesis by mediating VEGFA-induced specific subset of gene expression, cell migration, and tube formation. In response to VEGFA, is necessary and required for HDAC7 phosphorylation which induces HDAC7 nuclear export and endothelial cell proliferation and migration. During apoptosis induced by cytarabine and other genotoxic agents, PRKD1 is cleaved by caspase-3 at Asp-378, resulting in activation of its kinase function and increased sensitivity of cells to the cytotoxic effects of genotoxic agents. In epithelial cells, is required for transducing flagellin-stimulated inflammatory responses by binding and phosphorylating TLR5, which contributes to MAPK14/p38 activation and production of inflammatory cytokines. Acts as an activator of NLRP3 inflammasome assembly by mediating phosphorylation of NLRP3. May play a role in inflammatory response by mediating activation of NF-kappa-B. May be involved in pain transmission by directly modulating TRPV1 receptor. Plays a role in activated KRAS-mediated stabilization of ZNF304 in colorectal cancer (CRC) cells. Regulates nuclear translocation of transcription factor TFEB in macrophages upon live S.enterica infection. The chain is Serine/threonine-protein kinase D1 (PRKD1) from Homo sapiens (Human).